The chain runs to 1569 residues: Pentafunctional AROM polypeptide (1569 aa).

The 3-dehydroquinate synthase stretch occupies residues 1 to 382 (MAEAKKPGPE…HEPRASVVDD (382 aa)). NAD(+) contacts are provided by residues 49–51 (DTN), 84–87 (EASK), 115–117 (GGV), and Asp120. 7-phospho-2-dehydro-3-deoxy-D-arabino-heptonate is bound at residue Arg131. 140–141 (TT) lines the NAD(+) pocket. Residues Asp147 and Lys153 each coordinate 7-phospho-2-dehydro-3-deoxy-D-arabino-heptonate. Position 162 (Lys162) interacts with NAD(+). Asn163 provides a ligand contact to 7-phospho-2-dehydro-3-deoxy-D-arabino-heptonate. Residues 180 to 183 (FLET) and Asn191 each bind NAD(+). Glu195 is a Zn(2+) binding site. 7-phospho-2-dehydro-3-deoxy-D-arabino-heptonate is bound by residues 195–198 (EVVK) and Lys248. Catalysis depends on Glu258, which acts as the Proton acceptor; for 3-dehydroquinate synthase activity. 7-phospho-2-dehydro-3-deoxy-D-arabino-heptonate is bound by residues 262 to 266 (RNLLN) and His269. Position 269 (His269) interacts with Zn(2+). Residue His273 is the Proton acceptor; for 3-dehydroquinate synthase activity of the active site. 2 residues coordinate 7-phospho-2-dehydro-3-deoxy-D-arabino-heptonate: His285 and Lys354. His285 contributes to the Zn(2+) binding site. An EPSP synthase region spans residues 395-837 (VTPGVPSNLD…WDILSQAFKV (443 aa)). Cys819 acts as the For EPSP synthase activity in catalysis. A shikimate kinase region spans residues 859–1053 (ERSVFIIGMR…MEKDHSFFVS (195 aa)). 866-873 (GMRGAGKT) serves as a coordination point for ATP. The tract at residues 1054–1267 (LTVPDVSEAA…AAPGQMSAAE (214 aa)) is 3-dehydroquinase. His1170 acts as the Proton acceptor; for 3-dehydroquinate dehydratase activity in catalysis. Residue Lys1198 is the Schiff-base intermediate with substrate; for 3-dehydroquinate dehydratase activity of the active site. Positions 1280-1569 (PCNFYLFGKP…RDARSAVLGL (290 aa)) are shikimate dehydrogenase.

This sequence in the N-terminal section; belongs to the sugar phosphate cyclases superfamily. Dehydroquinate synthase family. It in the 2nd section; belongs to the EPSP synthase family. The protein in the 3rd section; belongs to the shikimate kinase family. In the 4th section; belongs to the type-I 3-dehydroquinase family. This sequence in the C-terminal section; belongs to the shikimate dehydrogenase family. Homodimer. Requires Zn(2+) as cofactor.

It localises to the cytoplasm. It carries out the reaction 7-phospho-2-dehydro-3-deoxy-D-arabino-heptonate = 3-dehydroquinate + phosphate. It catalyses the reaction 3-dehydroquinate = 3-dehydroshikimate + H2O. The enzyme catalyses shikimate + NADP(+) = 3-dehydroshikimate + NADPH + H(+). The catalysed reaction is shikimate + ATP = 3-phosphoshikimate + ADP + H(+). It carries out the reaction 3-phosphoshikimate + phosphoenolpyruvate = 5-O-(1-carboxyvinyl)-3-phosphoshikimate + phosphate. The protein operates within metabolic intermediate biosynthesis; chorismate biosynthesis; chorismate from D-erythrose 4-phosphate and phosphoenolpyruvate: step 2/7. It participates in metabolic intermediate biosynthesis; chorismate biosynthesis; chorismate from D-erythrose 4-phosphate and phosphoenolpyruvate: step 3/7. It functions in the pathway metabolic intermediate biosynthesis; chorismate biosynthesis; chorismate from D-erythrose 4-phosphate and phosphoenolpyruvate: step 4/7. Its pathway is metabolic intermediate biosynthesis; chorismate biosynthesis; chorismate from D-erythrose 4-phosphate and phosphoenolpyruvate: step 5/7. The protein operates within metabolic intermediate biosynthesis; chorismate biosynthesis; chorismate from D-erythrose 4-phosphate and phosphoenolpyruvate: step 6/7. In terms of biological role, the AROM polypeptide catalyzes 5 consecutive enzymatic reactions in prechorismate polyaromatic amino acid biosynthesis. The protein is Pentafunctional AROM polypeptide of Fusarium vanettenii (strain ATCC MYA-4622 / CBS 123669 / FGSC 9596 / NRRL 45880 / 77-13-4) (Fusarium solani subsp. pisi).